A 70-amino-acid chain; its full sequence is Conotoxin Im11.11 (70 aa).

Residues 1-25 form the signal peptide; it reads MFRLTSVGCILLVIAFLNLVGLTNA. Cystine bridges form between Cys26–Cys40, Cys33–Cys45, Cys39–Cys49, and Cys44–Cys53. Pro56 bears the Proline amide mark. Positions 60–70 are excised as a propeptide; it reads TRLQGFFKHRR.

The protein belongs to the conotoxin I2 superfamily. As to expression, expressed by the venom duct.

It is found in the secreted. Probable neurotoxin. The chain is Conotoxin Im11.11 from Conus imperialis (Imperial cone).